We begin with the raw amino-acid sequence, 97 residues long: YcgL domain-containing protein PP_4590 (97 aa).

The region spanning 3–87 (RICSIYKSPR…LEDEYIEHLP (85 aa)) is the YcgL domain.

This is YcgL domain-containing protein PP_4590 from Pseudomonas putida (strain ATCC 47054 / DSM 6125 / CFBP 8728 / NCIMB 11950 / KT2440).